The primary structure comprises 524 residues: Tyrosine-protein kinase HCK (524 aa).

Positions 1 to 72 (MGGRSSCEDP…NNSNSMPPGF (72 aa)) are disordered. A lipid anchor (N-myristoyl glycine) is attached at G2. Residue G3 is the site of S-palmitoyl cysteine attachment. A compositionally biased stretch (basic and acidic residues) spans 29–38 (FLRDGSKASK). Y50 is modified (phosphotyrosine; by autocatalysis). The span at 54–68 (PTSSSKLGPNNSNSM) shows a compositional bias: polar residues. An SH3 domain is found at 76–136 (SEDTIVVALY…PSNYVARVNS (61 aa)). The SH2 domain occupies 142 to 239 (WFFKGISRKD…GLCQKLSVPC (98 aa)). The residue at position 200 (T200) is a Phosphothreonine. Position 207 is a phosphotyrosine (Y207). The 254-residue stretch at 260–513 (LQMEKKLGAG…YIQSVLDDFY (254 aa)) folds into the Protein kinase domain. ATP is bound by residues 266-274 (LGAGQFGEV) and K288. D379 acts as the Proton acceptor in catalysis. A Phosphotyrosine; by autocatalysis modification is found at Y409. S460 is subject to Phosphoserine. Phosphotyrosine is present on Y520.

This sequence belongs to the protein kinase superfamily. Tyr protein kinase family. SRC subfamily. As to quaternary structure, interacts with ADAM15. Interacts with FASLG. Interacts with ARRB1 and ARRB2. Interacts with FCGR1A; the interaction may be indirect. Interacts with IL6ST. Interacts (via SH3 domain) with ELMO1. Interacts (via SH3 domain) with TP73. Interacts with YAP1. Interacts with ABL1 and ITGB1, and thereby recruits ABL1 to activated ITGB1. Interacts (via SH2 domain) with FLT3 (tyrosine phosphorylated). Interacts with CBL. Interacts with VAV1, WAS and RAPGEF1. Interacts (via SH3 domain) with WDCP. In terms of processing, phosphorylated on several tyrosine residues. Autophosphorylated. Becomes rapidly phosphorylated upon activation of the immunoglobulin receptors FCGR1A and FCGR2A. Phosphorylation at Tyr-409 increases kinase activity. Phosphorylation at Tyr-520 inhibits kinase activity. Kinase activity is not required for phosphorylation at Tyr-520, suggesting that this site may be a target of other kinases. Post-translationally, ubiquitinated by CBL, leading to its degradation via the proteasome. Isoform 2 palmitoylation at position 2 requires prior myristoylation. Palmitoylation at position 3 is required for caveolar localization of isoform 2. Expressed predominantly in cells of the myeloid and B-lymphoid lineages.

It is found in the cytoplasmic vesicle. The protein resides in the secretory vesicle. Its subcellular location is the cytoplasm. The protein localises to the cytosol. It localises to the membrane. It is found in the caveola. The protein resides in the lysosome. Its subcellular location is the cell projection. The protein localises to the podosome membrane. It localises to the cell membrane. It is found in the cell junction. The protein resides in the focal adhesion. Its subcellular location is the cytoskeleton. The protein localises to the golgi apparatus. It localises to the nucleus. It catalyses the reaction L-tyrosyl-[protein] + ATP = O-phospho-L-tyrosyl-[protein] + ADP + H(+). Its activity is regulated as follows. Subject to autoinhibition, mediated by intramolecular interactions involving the SH2 and SH3 domains. Kinase activity is also regulated by phosphorylation at regulatory tyrosine residues. Phosphorylation at Tyr-409 is required for optimal activity. Phosphorylation at Tyr-520 inhibits kinase activity. Inhibited by PP1. Its function is as follows. Non-receptor tyrosine-protein kinase found in hematopoietic cells that transmits signals from cell surface receptors and plays an important role in the regulation of innate immune responses, including neutrophil, monocyte, macrophage and mast cell functions, phagocytosis, cell survival and proliferation, cell adhesion and migration. Acts downstream of receptors that bind the Fc region of immunoglobulins, such as FCGR1A and FCGR2A, but also CSF3R, PLAUR, the receptors for IFNG, IL2, IL6 and IL8, and integrins, such as ITGB1 and ITGB2. During the phagocytic process, mediates mobilization of secretory lysosomes, degranulation, and activation of NADPH oxidase to bring about the respiratory burst. Plays a role in the release of inflammatory molecules. Promotes reorganization of the actin cytoskeleton and actin polymerization, formation of podosomes and cell protrusions. Inhibits TP73-mediated transcription activation and TP73-mediated apoptosis. Phosphorylates CBL in response to activation of immunoglobulin gamma Fc region receptors. Phosphorylates ADAM15, BCR, ELMO1, FCGR2A, GAB1, GAB2, RAPGEF1, STAT5B, TP73, VAV1 and WAS. The sequence is that of Tyrosine-protein kinase HCK (Hck) from Mus musculus (Mouse).